Reading from the N-terminus, the 139-residue chain is Intrinsically disordered protein, expressed in pharynx 15 (139 aa).

A compositionally biased stretch (polar residues) spans 1-12; the sequence is MNNNQGMYNTQT. Residues 1–98 form a disordered region; sequence MNNNQGMYNT…GSSTPSPQYS (98 aa). 2 stretches are compositionally biased toward low complexity: residues 13–41 and 49–98; these read TQGY…QTTT and QPQQ…PQYS.

The sequence is that of Intrinsically disordered protein, expressed in pharynx 15 from Caenorhabditis elegans.